Here is a 478-residue protein sequence, read N- to C-terminus: 3-ketoacyl-CoA synthase 3 (478 aa).

The N-terminal stretch at 1–25 (MDLLVMLLSLLVSYLIFKIWKRIDS) is a signal peptide. The 288-residue stretch at 26-313 (KRDQNCYILD…FMLCLLLKKL (288 aa)) folds into the FAE domain. Catalysis depends on residues Cys-168, His-247, His-345, His-349, His-378, and Asn-382.

This sequence belongs to the thiolase-like superfamily. Chalcone/stilbene synthases family. As to expression, expressed in siliques, leaves, stems and seedlings.

The protein localises to the endoplasmic reticulum. It catalyses the reaction a very-long-chain acyl-CoA + malonyl-CoA + H(+) = a very-long-chain 3-oxoacyl-CoA + CO2 + CoA. It participates in lipid metabolism; fatty acid biosynthesis. The protein is 3-ketoacyl-CoA synthase 3 of Arabidopsis thaliana (Mouse-ear cress).